Here is a 256-residue protein sequence, read N- to C-terminus: Carboxysome shell protein CsoS1D (256 aa).

The segment at 1-24 (MEPTSSLNRGDRKKGSSLVTGSEV) is disordered. BMC circularly permuted domains lie at 55 to 157 (ELRT…RTKP) and 158 to 256 (STSW…ISNY). Residues 120–121 (ER) carry the Gates the pore motif.

The protein belongs to the EutL/PduB family. In terms of assembly, homotrimer. Forms a dimer of stacked trimers, the same faces interact. A CsoS1-CsoS1D-CsoS2 complex can be isolated following expression in E.coli.

Its subcellular location is the carboxysome. Part of the carboxysome shell, a polyhedral inclusion where RuBisCO (ribulose bisphosphate carboxylase, cbbL-cbbS) is sequestered. It may control transport of RuBisCO reactants in and out of the carboxysome. There are estimated to be 6 CsoS1D hexamers per carboxysome. The chain is Carboxysome shell protein CsoS1D from Prochlorococcus marinus subsp. pastoris (strain CCMP1986 / NIES-2087 / MED4).